The sequence spans 334 residues: Fructose-1,6-bisphosphatase class 1 (334 aa).

4 residues coordinate Mg(2+): glutamate 87, aspartate 106, leucine 108, and aspartate 109. Residues 109 to 112 (DGSS), asparagine 208, and lysine 274 contribute to the substrate site. A Mg(2+)-binding site is contributed by glutamate 280.

The protein belongs to the FBPase class 1 family. Homotetramer. Mg(2+) serves as cofactor.

The protein resides in the cytoplasm. The catalysed reaction is beta-D-fructose 1,6-bisphosphate + H2O = beta-D-fructose 6-phosphate + phosphate. It participates in carbohydrate biosynthesis; gluconeogenesis. This Psychrobacter sp. (strain PRwf-1) protein is Fructose-1,6-bisphosphatase class 1.